The chain runs to 702 residues: Polyribonucleotide nucleotidyltransferase 3 (702 aa).

Positions 483 and 489 each coordinate Mg(2+). The KH domain maps to P550–I609. Positions G619 to K687 constitute an S1 motif domain.

It belongs to the polyribonucleotide nucleotidyltransferase family. It depends on Mg(2+) as a cofactor.

Its subcellular location is the cytoplasm. The enzyme catalyses RNA(n+1) + phosphate = RNA(n) + a ribonucleoside 5'-diphosphate. Its function is as follows. Involved in mRNA degradation. Catalyzes the phosphorolysis of single-stranded polyribonucleotides processively in the 3'- to 5'-direction. The polypeptide is Polyribonucleotide nucleotidyltransferase 3 (Alkaliphilus metalliredigens (strain QYMF)).